The sequence spans 432 residues: Probable anion transporter 5 (432 aa).

Residues 1–23 form the signal peptide; sequence MKLSNIPQRYVIVFLTFLSTCVC. Helical transmembrane passes span 50 to 70, 78 to 98, 101 to 121, 140 to 160, 164 to 184, 229 to 249, 273 to 293, 305 to 325, 331 to 351, 360 to 380, and 405 to 425; these read TILSTFFVGYACSQVPGGWAA, VLLLSFVLWSSTCFLVPLDPN, GLLVVARLLVGVAQGFIFPSI, ITTSGMYLGAALGMWLLPALV, GPESVFLAEALAGVIWSLLWI, LPVWAIVVNNFTFHYALYVLM, VPYLNMFVFSIVGGFIADYLI, KFLNTVGFLIASAALMVLPMF, VILCSSVALGFLALGRAGFAV, YAGIVMGVSNTAGTLAGIIGV, and VVFFIPGLLCIFSSVVFLLFS.

The protein belongs to the major facilitator superfamily. Sodium/anion cotransporter (TC 2.A.1.14) family. As to expression, ubiquitous.

The protein localises to the golgi apparatus membrane. Functionally, inorganic phosphate and probable anion transporter. This Arabidopsis thaliana (Mouse-ear cress) protein is Probable anion transporter 5 (ANTR5).